The following is a 145-amino-acid chain: 3-dehydroquinate dehydratase (145 aa).

Tyrosine 24 functions as the Proton acceptor in the catalytic mechanism. Residues asparagine 75, histidine 81, and aspartate 88 each contribute to the substrate site. The Proton donor role is filled by histidine 101. Substrate-binding positions include 102–103 and arginine 112; that span reads IS.

Belongs to the type-II 3-dehydroquinase family. In terms of assembly, homododecamer.

The catalysed reaction is 3-dehydroquinate = 3-dehydroshikimate + H2O. It participates in metabolic intermediate biosynthesis; chorismate biosynthesis; chorismate from D-erythrose 4-phosphate and phosphoenolpyruvate: step 3/7. In terms of biological role, catalyzes a trans-dehydration via an enolate intermediate. The polypeptide is 3-dehydroquinate dehydratase (aroQ) (Corynebacterium glutamicum (strain ATCC 13032 / DSM 20300 / JCM 1318 / BCRC 11384 / CCUG 27702 / LMG 3730 / NBRC 12168 / NCIMB 10025 / NRRL B-2784 / 534)).